Consider the following 233-residue polypeptide: Antilisterial bacteriocin subtilosin biosynthesis protein AlbG (233 aa).

Transmembrane regions (helical) follow at residues 4-24 (STVF…FGWV), 46-66 (GLLA…LHYV), 116-136 (TYVM…FEIV), 145-165 (TPPI…LFYM), and 192-212 (IGWM…LAAI).

Its subcellular location is the cell membrane. Its function is as follows. Involved in the production of the bacteriocin subtilosin. This chain is Antilisterial bacteriocin subtilosin biosynthesis protein AlbG (albG), found in Bacillus subtilis.